The chain runs to 430 residues: T-kininogen 2 (430 aa).

The first 18 residues, 1-18, serve as a signal peptide directing secretion; the sequence is MKLITILLLCSRLLPSLA. Q19 is modified (pyrrolidone carboxylic acid). The 104-residue stretch at 28–131 folds into the Cystatin kininogen-type 1 domain; sequence CNDETVFQAV…TQICNITPGK (104 aa). 9 disulfides stabilise this stretch: C28-C404, C83-C94, C107-C125, C141-C144, C205-C217, C228-C247, C263-C266, C327-C339, and C350-C369. The N-linked (GlcNAc...) asparagine glycan is linked to N82. A Cystatin kininogen-type 2 domain is found at 150 to 253; sequence MDSSDLKPVL…SQSCDLYPGD (104 aa). Residues N168 and N204 are each glycosylated (N-linked (GlcNAc...) asparagine). The Cystatin kininogen-type 3 domain occupies 272 to 375; that stretch reads VDSPELKEAL…TVRCQALDMM (104 aa). The N-linked (GlcNAc...) asparagine glycan is linked to N326. A disordered region spans residues 410 to 430; that stretch reads LSKAGAGPAPDHQAEASTVTP.

As T-kinin is preceded by a Met instead of an Arg or Lys, it is not released from its precursor by either tissue or plasma kallikrein. In terms of tissue distribution, plasma.

It localises to the secreted. The protein resides in the extracellular space. In terms of biological role, kininogens are plasma glycoproteins with a number of functions: (1) as precursor of the active peptide bradykinin they effect smooth muscle contraction, induction of hypotension and increase of vascular permeability. (2) They play a role in blood coagulation by helping to position optimally prekallikrein and factor XI next to factor XII. (3) They are inhibitor of thiol proteases. The sequence is that of T-kininogen 2 from Rattus norvegicus (Rat).